A 392-amino-acid polypeptide reads, in one-letter code: Stilbene synthase 2 (392 aa).

Substrate is bound at residue 55 to 58 (KFNR). The active site involves cysteine 164. Substrate is bound by residues leucine 267 and 305 to 307 (GGP).

The protein belongs to the thiolase-like superfamily. Chalcone/stilbene synthases family. In terms of assembly, homodimer.

Its subcellular location is the cytoplasm. The enzyme catalyses 4-coumaroyl-CoA + 3 malonyl-CoA + 3 H(+) = trans-resveratrol + 4 CO2 + 4 CoA. It functions in the pathway phytoalexin biosynthesis; 3,4',5-trihydroxystilbene biosynthesis; 3,4',5-trihydroxystilbene from trans-4-coumarate: step 2/2. Mediates resistance to pathogens which are sensitive to stilbenes. This Vitis vinifera (Grape) protein is Stilbene synthase 2.